We begin with the raw amino-acid sequence, 66 residues long: Large ribosomal subunit protein bL32 (66 aa).

This sequence belongs to the bacterial ribosomal protein bL32 family.

The chain is Large ribosomal subunit protein bL32 from Rickettsia canadensis (strain McKiel).